Here is a 516-residue protein sequence, read N- to C-terminus: ADP-ribosylation factor GTPase-activating protein 3 (516 aa).

The Arf-GAP domain occupies 10 to 126; the sequence is LTIFKRLRSV…IKSLASQATR (117 aa). The segment at 25 to 48 adopts a C4-type zinc-finger fold; sequence CFDCGAKNPSWASITYGVFLCIDC. Positions 170-199 are disordered; it reads AEPSSLTSRPAETTLENNEGGQEQGPCVEG. Positions 173-190 are enriched in polar residues; the sequence is SSLTSRPAETTLENNEGG. The residue at position 231 (Ser231) is a Phosphoserine. A coiled-coil region spans residues 243–264; that stretch reads NEIEKQAQAADKMKEQEDLAKA. A phosphoserine mark is found at Ser270, Ser274, Ser331, and Ser370. A disordered region spans residues 393-417; it reads TTGYSDRPTARHKPDYEPVENTDEA. Phosphoserine occurs at positions 428, 451, 453, 455, 457, and 458.

It localises to the cytoplasm. It is found in the golgi apparatus membrane. GAP activity stimulated by phosphatidylinositol 4,5-bisphosphate (PIP2). Functionally, GTPase-activating protein (GAP) for ADP ribosylation factor 1 (ARF1). Hydrolysis of ARF1-bound GTP may lead to dissociation of coatomer from Golgi-derived membranes to allow fusion with target membranes. This chain is ADP-ribosylation factor GTPase-activating protein 3, found in Pongo abelii (Sumatran orangutan).